Reading from the N-terminus, the 276-residue chain is Glucosamine-6-phosphate deaminase 2 (276 aa).

The Proton acceptor; for enolization step role is filled by Asp72. A coiled-coil region spans residues His105–Gly130. Catalysis depends on Asp141, which acts as the For ring-opening step. His143 acts as the Proton acceptor; for ring-opening step in catalysis. Glu148 acts as the For ring-opening step in catalysis. A Phosphothreonine modification is found at Thr161.

This sequence belongs to the glucosamine/galactosamine-6-phosphate isomerase family. In terms of assembly, homohexamer. As to expression, ubiquitous, with highest expression detected in testis, ovary, placenta, and heart.

It localises to the cytoplasm. It catalyses the reaction alpha-D-glucosamine 6-phosphate + H2O = beta-D-fructose 6-phosphate + NH4(+). It functions in the pathway nucleotide-sugar biosynthesis; UDP-N-acetyl-alpha-D-glucosamine biosynthesis; alpha-D-glucosamine 6-phosphate from D-fructose 6-phosphate: step 1/1. Its activity is regulated as follows. Allosterically activated by N-acetylglucosamine-6-phosphate (GlcNAc6P). Functionally, catalyzes the reversible conversion of alpha-D-glucosamine 6-phosphate (GlcN-6P) into beta-D-fructose 6-phosphate (Fru-6P) and ammonium ion, a regulatory reaction step in de novo uridine diphosphate-N-acetyl-alpha-D-glucosamine (UDP-GlcNAc) biosynthesis via hexosamine pathway. Deamination is coupled to aldo-keto isomerization mediating the metabolic flux from UDP-GlcNAc toward Fru-6P. At high ammonium level can drive amination and isomerization of Fru-6P toward hexosamines and UDP-GlcNAc synthesis. Has a role in fine tuning the metabolic fluctuations of cytosolic UDP-GlcNAc and their effects on hyaluronan synthesis that occur during tissue remodeling. The protein is Glucosamine-6-phosphate deaminase 2 of Homo sapiens (Human).